Here is a 166-residue protein sequence, read N- to C-terminus: Putative 4-hydroxy-4-methyl-2-oxoglutarate aldolase (166 aa).

Residues 74–77 (GDQI) and Arg96 each bind substrate. Residue Asp97 participates in a divalent metal cation binding.

It belongs to the class II aldolase/RraA-like family. In terms of assembly, homotrimer. A divalent metal cation is required as a cofactor.

It catalyses the reaction 4-hydroxy-4-methyl-2-oxoglutarate = 2 pyruvate. It carries out the reaction oxaloacetate + H(+) = pyruvate + CO2. In terms of biological role, catalyzes the aldol cleavage of 4-hydroxy-4-methyl-2-oxoglutarate (HMG) into 2 molecules of pyruvate. Also contains a secondary oxaloacetate (OAA) decarboxylase activity due to the common pyruvate enolate transition state formed following C-C bond cleavage in the retro-aldol and decarboxylation reactions. This Xanthomonas campestris pv. campestris (strain 8004) protein is Putative 4-hydroxy-4-methyl-2-oxoglutarate aldolase.